Consider the following 313-residue polypeptide: Methionyl-tRNA formyltransferase (313 aa).

The disordered stretch occupies residues 32–51 (QPDRRKGRGKELQPPPAKRK). 109 to 112 (SLLP) serves as a coordination point for (6S)-5,6,7,8-tetrahydrofolate.

The protein belongs to the Fmt family.

The catalysed reaction is L-methionyl-tRNA(fMet) + (6R)-10-formyltetrahydrofolate = N-formyl-L-methionyl-tRNA(fMet) + (6S)-5,6,7,8-tetrahydrofolate + H(+). In terms of biological role, attaches a formyl group to the free amino group of methionyl-tRNA(fMet). The formyl group appears to play a dual role in the initiator identity of N-formylmethionyl-tRNA by promoting its recognition by IF2 and preventing the misappropriation of this tRNA by the elongation apparatus. The chain is Methionyl-tRNA formyltransferase from Natranaerobius thermophilus (strain ATCC BAA-1301 / DSM 18059 / JW/NM-WN-LF).